Here is a 618-residue protein sequence, read N- to C-terminus: Glycine--tRNA ligase 2 (618 aa).

E187 is a binding site for glycine. ATP contacts are provided by residues 219 to 221 and 230 to 231; these read RNE and RV. A glycine-binding site is contributed by E238. 347–348 contributes to the ATP binding site; the sequence is EC. Glycine is bound at residue 466 to 468; it reads EPS. R473 lines the ATP pocket.

Belongs to the class-II aminoacyl-tRNA synthetase family. Homodimer.

The protein localises to the cytoplasm. The catalysed reaction is tRNA(Gly) + glycine + ATP = glycyl-tRNA(Gly) + AMP + diphosphate. It carries out the reaction 2 ATP + H(+) = P(1),P(4)-bis(5'-adenosyl) tetraphosphate + diphosphate. In terms of biological role, catalyzes the ATP-dependent ligation of glycine to the 3'-end of its cognate tRNA, via the formation of an aminoacyl-adenylate intermediate (Gly-AMP). Also produces diadenosine tetraphosphate (Ap4A), a universal pleiotropic signaling molecule needed for cell regulation pathways, by direct condensation of 2 ATPs. Thereby, may play a special role in Ap4A homeostasis. This chain is Glycine--tRNA ligase 2 (GRS2), found in Saccharomyces cerevisiae (strain ATCC 204508 / S288c) (Baker's yeast).